The primary structure comprises 337 residues: 4-hydroxy-3-methylbut-2-enyl diphosphate reductase (337 aa).

C38 lines the [4Fe-4S] cluster pocket. Positions 67 and 100 each coordinate (2E)-4-hydroxy-3-methylbut-2-enyl diphosphate. Positions 67 and 100 each coordinate dimethylallyl diphosphate. Isopentenyl diphosphate is bound by residues H67 and H100. [4Fe-4S] cluster is bound at residue C122. H150 is a binding site for (2E)-4-hydroxy-3-methylbut-2-enyl diphosphate. H150 is a dimethylallyl diphosphate binding site. H150 provides a ligand contact to isopentenyl diphosphate. The Proton donor role is filled by E152. A (2E)-4-hydroxy-3-methylbut-2-enyl diphosphate-binding site is contributed by T190. A [4Fe-4S] cluster-binding site is contributed by C220. Residues S248, S249, N250, and S293 each coordinate (2E)-4-hydroxy-3-methylbut-2-enyl diphosphate. The dimethylallyl diphosphate site is built by S248, S249, N250, and S293. S248, S249, N250, and S293 together coordinate isopentenyl diphosphate.

Belongs to the IspH family. [4Fe-4S] cluster is required as a cofactor.

It carries out the reaction isopentenyl diphosphate + 2 oxidized [2Fe-2S]-[ferredoxin] + H2O = (2E)-4-hydroxy-3-methylbut-2-enyl diphosphate + 2 reduced [2Fe-2S]-[ferredoxin] + 2 H(+). The catalysed reaction is dimethylallyl diphosphate + 2 oxidized [2Fe-2S]-[ferredoxin] + H2O = (2E)-4-hydroxy-3-methylbut-2-enyl diphosphate + 2 reduced [2Fe-2S]-[ferredoxin] + 2 H(+). It participates in isoprenoid biosynthesis; dimethylallyl diphosphate biosynthesis; dimethylallyl diphosphate from (2E)-4-hydroxy-3-methylbutenyl diphosphate: step 1/1. It functions in the pathway isoprenoid biosynthesis; isopentenyl diphosphate biosynthesis via DXP pathway; isopentenyl diphosphate from 1-deoxy-D-xylulose 5-phosphate: step 6/6. Its function is as follows. Catalyzes the conversion of 1-hydroxy-2-methyl-2-(E)-butenyl 4-diphosphate (HMBPP) into a mixture of isopentenyl diphosphate (IPP) and dimethylallyl diphosphate (DMAPP). Acts in the terminal step of the DOXP/MEP pathway for isoprenoid precursor biosynthesis. This Mycolicibacterium vanbaalenii (strain DSM 7251 / JCM 13017 / BCRC 16820 / KCTC 9966 / NRRL B-24157 / PYR-1) (Mycobacterium vanbaalenii) protein is 4-hydroxy-3-methylbut-2-enyl diphosphate reductase.